A 313-amino-acid chain; its full sequence is Ribosomal RNA small subunit methyltransferase H (313 aa).

Residues Gly35–His37, Asp55, Phe80, Asp102, and Gln109 contribute to the S-adenosyl-L-methionine site.

It belongs to the methyltransferase superfamily. RsmH family.

Its subcellular location is the cytoplasm. It catalyses the reaction cytidine(1402) in 16S rRNA + S-adenosyl-L-methionine = N(4)-methylcytidine(1402) in 16S rRNA + S-adenosyl-L-homocysteine + H(+). Its function is as follows. Specifically methylates the N4 position of cytidine in position 1402 (C1402) of 16S rRNA. This is Ribosomal RNA small subunit methyltransferase H from Shewanella frigidimarina (strain NCIMB 400).